The sequence spans 348 residues: DnaJ homolog subfamily B member 5 (348 aa).

Positions 4-68 constitute a J domain; it reads DYYKILGIPS…KKRGLYDQYG (65 aa).

This chain is DnaJ homolog subfamily B member 5 (DNAJB5), found in Homo sapiens (Human).